The sequence spans 72 residues: Translation initiation factor IF-1 (72 aa).

Positions 1–72 (MAKDDVIEIQ…TKGRITYRFK (72 aa)) constitute an S1-like domain.

Belongs to the IF-1 family. In terms of assembly, component of the 30S ribosomal translation pre-initiation complex which assembles on the 30S ribosome in the order IF-2 and IF-3, IF-1 and N-formylmethionyl-tRNA(fMet); mRNA recruitment can occur at any time during PIC assembly.

The protein localises to the cytoplasm. Functionally, one of the essential components for the initiation of protein synthesis. Stabilizes the binding of IF-2 and IF-3 on the 30S subunit to which N-formylmethionyl-tRNA(fMet) subsequently binds. Helps modulate mRNA selection, yielding the 30S pre-initiation complex (PIC). Upon addition of the 50S ribosomal subunit IF-1, IF-2 and IF-3 are released leaving the mature 70S translation initiation complex. This Lacticaseibacillus paracasei (strain ATCC 334 / BCRC 17002 / CCUG 31169 / CIP 107868 / KCTC 3260 / NRRL B-441) (Lactobacillus paracasei) protein is Translation initiation factor IF-1.